We begin with the raw amino-acid sequence, 1133 residues long: Envelopment polyprotein (1133 aa).

Positions 1 to 16 (MWSLLLLAALVGQGFA) are cleaved as a signal peptide. Residues 17-484 (LKNVFDMRIQ…PGFHGWATAA (468 aa)) lie on the Lumenal side of the membrane. 10 disulfides stabilise this stretch: Cys61–Cys155, Cys107–Cys126, Cys131–Cys136, Cys173–Cys183, Cys208–Cys245, Cys232–Cys349, Cys374–Cys433, Cys378–Cys387, Cys403–Cys422, and Cys450–Cys473. The N-linked (GlcNAc...) asparagine; by host glycan is linked to Asn132. N-linked (GlcNAc...) asparagine; by host glycosylation is found at Asn233 and Asn345. The N-linked (GlcNAc...) asparagine; by host glycan is linked to Asn397. Residues 485–504 (LLITFCFGWVLIPACTLAIL) traverse the membrane as a helical segment. The Cytoplasmic portion of the chain corresponds to 505–626 (LVLKFFANIL…NLFRYKSRCY (122 aa)). Residues 514–531 (LHTSNQENRFKAILRKIK) form a binding to the ribonucleoprotein region. 2 consecutive CCHC-type zinc fingers follow at residues 543-563 (CEIC…NLSC) and 568-589 (CPYC…YKVC). Binding to the ribonucleoprotein regions lie at residues 586 to 603 (YKVC…KKTV), 590 to 601 (QATHRFREDLKK), and 609 to 623 (GPGC…RYKS). An ITAM domain is found at 609–632 (GPGCYRTLNLFRYKSRCYILTMWT). The YxxL motif lies at 613-616 (YRTL). The chain crosses the membrane as a helical span at residues 627–647 (ILTMWTLLLIIESILWAASAA). Over 648-1105 (EIPLVPLWTD…VMGIINGNWV (458 aa)) the chain is Lumenal. Intrachain disulfides connect Cys733–Cys768, Cys737–Cys775, Cys749–Cys883, Cys763–Cys894, Cys778–Cys902, Cys804–Cys813, Cys821–Cys830, and Cys861–Cys865. A fusion loop region spans residues 755–775 (YEYENSWACNPPDCPGVGTGC). A glycan (N-linked (GlcNAc...) asparagine; by host) is linked at Asn926. Disulfide bonds link Cys968-Cys998, Cys991-Cys1043, Cys1008-Cys1013, Cys1044-Cys1049, and Cys1083-Cys1087. A helical transmembrane segment spans residues 1106–1125 (VLIVLCVLLLFSLILLSILC). A binding to the ribonucleoprotein region spans residues 1120 to 1133 (LLSILCPVRKHKKS). At 1126–1133 (PVRKHKKS) the chain is on the cytoplasmic side.

The protein belongs to the hantavirus envelope glycoprotein family. In terms of assembly, homodimer. Homotetramer; forms heterotetrameric Gn-Gc spikes in the pre-fusion conformation. Interacts (via C-terminus) with the nucleoprotein. Interacts with host TUFM; this interaction contributes to the virus-induced degradation of mitochondria by autophagy, which leads to degradation of host MAVS and inhibition of type I interferon (IFN) responses. Interacts with host MAP1LC3B; this interaction contributes to the virus-induced degradation of mitochondria by autophagy, which leads to degradation of host MAVS and inhibition of type I interferon (IFN) responses. As to quaternary structure, homodimer. Homotetramer; forms heterotetrameric Gn-Gc spikes in the pre-fusion conformation. Homotrimer; forms homotrimer in the post-fusion conformation at acidic pH. Interacts (via C-terminus) with the nucleoprotein. Post-translationally, envelope polyprotein precursor is quickly cleaved in vivo just after synthesis, presumably by host signal peptidase.

The protein localises to the virion membrane. Its subcellular location is the host cell surface. The protein resides in the host Golgi apparatus membrane. It localises to the host endoplasmic reticulum membrane. It is found in the host mitochondrion. Its function is as follows. Forms homotetramers with glycoprotein C at the surface of the virion. Attaches the virion to host cell receptors including integrin ITGAV/ITGB3. This attachment induces virion internalization predominantly through clathrin-dependent endocytosis. Mediates the assembly and budding of infectious virus particles through its interaction with the nucleocapsid protein and the viral genome. May dysregulate normal immune and endothelial cell responses through an ITAM motif. Translocates to mitochondria, binds to host TUFM and recruits MAP1LC3B. These interactions induce mitochondrial autophagy and therefore destruction of host MAVS leading to inhibition of type I interferon (IFN) responses. Concomitant breakdown of glycoprotein N is apparently prevented by the nucleoprotein that may inhibit Gn-stimulated autophagosome-lysosome fusion. Interacts with the viral genomic RNA. Functionally, forms homotetramers with glycoprotein N at the surface of the virion. Attaches the virion to host cell receptors including integrin ITGAV/ITGB3. This attachment induces virion internalization predominantly through clathrin-dependent endocytosis. Class II fusion protein that promotes fusion of viral membrane with host endosomal membrane after endocytosis of the virion. This is Envelopment polyprotein (GP) from Homo sapiens (Human).